Reading from the N-terminus, the 650-residue chain is Cytosolic Fe-S cluster assembly factor NAR1 (650 aa).

Residues cysteine 22, cysteine 81, cysteine 84, cysteine 87, cysteine 215, cysteine 270, cysteine 480, and cysteine 484 each contribute to the [4Fe-4S] cluster site.

Belongs to the NARF family.

In terms of biological role, component of the cytosolic Fe/S protein assembly machinery. Required for maturation of extramitochondrial Fe/S proteins. May play a role in the transfer of pre-assembled Fe/S clusters to target apoproteins. The chain is Cytosolic Fe-S cluster assembly factor NAR1 (NAR1) from Cryptococcus neoformans var. neoformans serotype D (strain JEC21 / ATCC MYA-565) (Filobasidiella neoformans).